We begin with the raw amino-acid sequence, 606 residues long: Electron transfer flavoprotein-ubiquinone oxidoreductase, mitochondrial (606 aa).

FAD is bound at residue 59–73 (VVIVGAGPSGLSTAI). A helical membrane pass occupies residues 448-468 (PSLHWGTIPGLIYGALEMYIF). The [4Fe-4S] cluster site is built by Cys551, Cys575, Cys578, and Cys581.

This sequence belongs to the ETF-QO/FixC family. As to quaternary structure, monomer. It depends on [4Fe-4S] cluster as a cofactor. The cofactor is FAD.

It is found in the mitochondrion inner membrane. It catalyses the reaction a ubiquinone + reduced [electron-transfer flavoprotein] = a ubiquinol + oxidized [electron-transfer flavoprotein] + H(+). Accepts electrons from ETF and reduces ubiquinone. This chain is Electron transfer flavoprotein-ubiquinone oxidoreductase, mitochondrial (etfdh), found in Dictyostelium discoideum (Social amoeba).